The sequence spans 249 residues: Probable aquaporin TIP-type (249 aa).

2 consecutive transmembrane segments (helical) span residues 22-42 and 56-76; these read AGLAEFISTFIFVFAGSGSGI and AGLISASIAHAFALFVAVSVG. The NPA 1 motif lies at 85 to 87; that stretch reads NPA. The next 3 membrane-spanning stretches (helical) occupy residues 103-123, 137-157, and 169-189; these read IVYIIAQLLGSIVCSALLVFV, VGVGPALVLEIVMTFGLVYTV, and IGIIAPIAIGFIVGANILVGG. Positions 197-199 match the NPA 2 motif; the sequence is NPA. The chain crosses the membrane as a helical span at residues 217–237; it reads YWAGPLIGGGIAGLVYEVLFI.

The protein belongs to the MIP/aquaporin (TC 1.A.8) family. TIP (TC 1.A.8.10) subfamily. In terms of tissue distribution, expression is highest in root tips, with slightly lower levels of hybridizing mRNA in stems, and whole roots, and much lower levels in nodules and leaves.

The protein localises to the membrane. Aquaporins facilitate the transport of water and small neutral solutes across cell membranes. This Medicago sativa (Alfalfa) protein is Probable aquaporin TIP-type (MCP1).